We begin with the raw amino-acid sequence, 524 residues long: MFHCIPLWRCNRHVEAIDKRHCSLVYVPEEIYRYARSLEELLLDANQLRELPEQFFQLVKLRKLGLSDNEIQRLPPEIANFMQLVELDVSRNDIPEIPESIAFCKALQVADFSGNPLTRLPESFPELQNLTCLSVNDISLQSLPENIGNLYNLASLELRENLLTYLPDSLTQLRRLEELDLGNNEIYNLPESIGALLHLKDLWLDGNQLSELPQEIGNLKNLLCLDVSENRLERLPEEISGLTSLTYLVISQNLLETIPEGIGKLKKLSILKLDQNRLTQLPEAIGDCENLTELVLTENRLLTLPKSIGKLKKLSNLNADRNKLVSLPKEIGGCCSLTMFCIRDNRLTRLPAEVSQAVELHVLDVAGNRLHHLPLSLTTLKLKALWLSDNQSQPLLTFQTDIDRATGEKILTCVLLPQMPSEPICQESLPRCGALESLVTDMSEEAWNDRSVHRVSAIRFLEDEKDEDENETRTLQRRATPHPGELKNMKKTVENLRNDMNAAKGLDSNKNEVNHAAERVTTSV.

17 LRR repeats span residues 11 to 34, 35 to 58, 60 to 81, 83 to 105, 107 to 126, 127 to 149, 150 to 172, 173 to 196, 198 to 218, 219 to 242, 244 to 264, 265 to 288, 290 to 310, 311 to 334, 336 to 356, 357 to 380, and 382 to 405; these read NRHVEAIDKRHCSLVYVPEEIYRY, ARSLEELLLDANQLRELPEQFFQL, KLRKLGLSDNEIQRLPPEIANF, QLVELDVSRNDIPEIPESIAFCK, LQVADFSGNPLTRLPESFPE, LQNLTCLSVNDISLQSLPENIGN, LYNLASLELRENLLTYLPDSLTQ, LRRLEELDLGNNEIYNLPESIGAL, HLKDLWLDGNQLSELPQEIGN, LKNLLCLDVSENRLERLPEEISGL, SLTYLVISQNLLETIPEGIGK, LKKLSILKLDQNRLTQLPEAIGDC, NLTELVLTENRLLTLPKSIGK, LKKLSNLNADRNKLVSLPKEIGGC, SLTMFCIRDNRLTRLPAEVSQ, AVELHVLDVAGNRLHHLPLSLTTL, and LKALWLSDNQSQPLLTFQTDIDRA. Residues 456–512 adopt a coiled-coil conformation; it reads SAIRFLEDEKDEDENETRTLQRRATPHPGELKNMKKTVENLRNDMNAAKGLDSNKNE. The tract at residues 464 to 485 is disordered; it reads EKDEDENETRTLQRRATPHPGE. T480 is modified (phosphothreonine).

In terms of assembly, interacts with DLG1. May form a complex with DLG1 and ERBIN, where interaction between LRRC1 and ERBIN is indirect.

It localises to the cytoplasm. Its subcellular location is the membrane. This is Leucine-rich repeat-containing protein 1 (Lrrc1) from Mus musculus (Mouse).